We begin with the raw amino-acid sequence, 750 residues long: Circadian input-output histidine kinase CikA (750 aa).

Residues 1–173 (MLPAFSPIFR…QVIAQIRQSL (173 aa)) form an N-terminal domain region. The tract at residues 174-333 (DLSEILNNAV…KNFLGQIGEH (160 aa)) is GAF domain. The Histidine kinase domain occupies 385–609 (NISHELRTPL…IFTTVIPQQN (225 aa)). Histidine 388 carries the post-translational modification Phosphohistidine; by autocatalysis. The interval 604–750 (VIPQQNFPPT…VQSIQQEPLR (147 aa)) is psR domain, bind KaiB(fs). Positions 631-745 (SVIVIEQDEE…LLLQRVQSIQ (115 aa)) constitute a Response regulatory domain. Position 680 is a 4-aspartylphosphate (aspartate 680).

This sequence in the N-terminal section; belongs to the phytochrome family. In terms of assembly, homodimer. Part of the circadian clock (KaiA, KaiB, KaiC, CikA, RpaA, SasA), the composition of which varies during the circadian cycle. KaiA and CikA compete for binding to KaiB(fs). Interacts with RpaA.

It carries out the reaction ATP + protein L-histidine = ADP + protein N-phospho-L-histidine.. Its function is as follows. Functions in an input pathway to the Kai circadian clock. Senses oxidized quinones via its C-terminal pseudo-receiver domain, providing a link between cell metabolism and the clock. Affects the ratio of phosphorylated to unphosphorylated KaiC, binds quinones via its pseudo-receptor domain. Quinone-binding destabilizes the protein rapidly. Autophosphorylates, does not transfer the phosphate to its pseudo-receiver (PsR) domain. May play a role in cell division. In terms of biological role, also functions in a two-component CikA/RpaA output pathway from the circadian clock, negatively regulating kaiBC expression independently of labA and of sasA. One of three clock output pathways. Dephosphorylates phospho-RpaA, enhanced by KaiB and KaiC, has only modest kinase activity on RpaA. In Synechocystis sp. (strain ATCC 27184 / PCC 6803 / Kazusa), this protein is Circadian input-output histidine kinase CikA.